Consider the following 397-residue polypeptide: Elongation factor Tu (397 aa).

The region spanning 10-206 (KPHVNIGTIG…AVDENIPQPE (197 aa)) is the tr-type G domain. The G1 stretch occupies residues 19–26 (GHVDHGKT). 19 to 26 (GHVDHGKT) lines the GTP pocket. Thr26 is a binding site for Mg(2+). The interval 62-66 (GITIS) is G2. The segment at 83–86 (DCPG) is G3. GTP contacts are provided by residues 83 to 87 (DCPGH) and 138 to 141 (NKAD). A G4 region spans residues 138 to 141 (NKAD). Residues 176-178 (SAL) are G5.

This sequence belongs to the TRAFAC class translation factor GTPase superfamily. Classic translation factor GTPase family. EF-Tu/EF-1A subfamily. Monomer.

Its subcellular location is the cytoplasm. The enzyme catalyses GTP + H2O = GDP + phosphate + H(+). Its function is as follows. GTP hydrolase that promotes the GTP-dependent binding of aminoacyl-tRNA to the A-site of ribosomes during protein biosynthesis. The polypeptide is Elongation factor Tu (Streptomyces cinnamoneus (Streptoverticillium cinnamoneum)).